We begin with the raw amino-acid sequence, 232 residues long: Orotidine 5'-phosphate decarboxylase (232 aa).

Residues aspartate 16, lysine 38, 65–74 (DLKLHDIGNT), threonine 119, arginine 180, glutamine 189, glycine 209, and arginine 210 contribute to the substrate site. The active-site Proton donor is the lysine 67.

Belongs to the OMP decarboxylase family. Type 1 subfamily. As to quaternary structure, homodimer.

The catalysed reaction is orotidine 5'-phosphate + H(+) = UMP + CO2. The protein operates within pyrimidine metabolism; UMP biosynthesis via de novo pathway; UMP from orotate: step 2/2. Catalyzes the decarboxylation of orotidine 5'-monophosphate (OMP) to uridine 5'-monophosphate (UMP). This is Orotidine 5'-phosphate decarboxylase from Methylorubrum populi (strain ATCC BAA-705 / NCIMB 13946 / BJ001) (Methylobacterium populi).